A 349-amino-acid chain; its full sequence is Isopentenyl-diphosphate delta-isomerase (349 aa).

Residue 5–6 (RK) coordinates substrate. Residues serine 62, 63 to 65 (AIT), serine 93, and asparagine 122 contribute to the FMN site. A substrate-binding site is contributed by 93-95 (SQR). Glutamine 151 provides a ligand contact to substrate. Glutamate 152 contributes to the Mg(2+) binding site. FMN contacts are provided by residues lysine 183, threonine 213, 259-261 (GIR), and 280-281 (AL).

It belongs to the IPP isomerase type 2 family. Homooctamer. Dimer of tetramers. The cofactor is FMN. It depends on NADPH as a cofactor. Requires Mg(2+) as cofactor.

It is found in the cytoplasm. The catalysed reaction is isopentenyl diphosphate = dimethylallyl diphosphate. Functionally, involved in the biosynthesis of isoprenoids. Catalyzes the 1,3-allylic rearrangement of the homoallylic substrate isopentenyl (IPP) to its allylic isomer, dimethylallyl diphosphate (DMAPP). This Methanothermobacter thermautotrophicus (strain ATCC 29096 / DSM 1053 / JCM 10044 / NBRC 100330 / Delta H) (Methanobacterium thermoautotrophicum) protein is Isopentenyl-diphosphate delta-isomerase.